Consider the following 183-residue polypeptide: Ion-translocating oxidoreductase complex subunit B (183 aa).

A hydrophobic region spans residues 1-23 (MLSALLVMAAIAVVLGAALGFAA). The 4Fe-4S domain maps to 29 to 88 (EGDPLVDKIDAILPQTQCGQCGYPGCKPYAQAIAQGEADINQCPPGGEEGVRKLADLLGR). Positions 46, 49, 54, 71, 113, 116, 119, 123, 143, 146, 149, and 153 each coordinate [4Fe-4S] cluster. 4Fe-4S ferredoxin-type domains are found at residues 104–133 (AVAY…GAAK) and 135–163 (MHTV…MEPV).

Belongs to the 4Fe4S bacterial-type ferredoxin family. RnfB subfamily. In terms of assembly, the complex is composed of six subunits: RnfA, RnfB, RnfC, RnfD, RnfE and RnfG. The cofactor is [4Fe-4S] cluster.

The protein resides in the cell inner membrane. Functionally, part of a membrane-bound complex that couples electron transfer with translocation of ions across the membrane. In Azoarcus sp. (strain BH72), this protein is Ion-translocating oxidoreductase complex subunit B.